Reading from the N-terminus, the 141-residue chain is Nucleoside triphosphatase NudI (141 aa).

Residues 1–141 enclose the Nudix hydrolase domain; sequence MRQRTIVCPI…RLTFTQKGLL (141 aa). The Nudix box motif lies at 38–59; it reads GGMEPGETMEEALRREIREELG.

This sequence belongs to the Nudix hydrolase family. NudI subfamily. Monomer. Requires Mg(2+) as cofactor.

It catalyses the reaction a ribonucleoside 5'-triphosphate + H2O = a ribonucleoside 5'-phosphate + diphosphate + H(+). It carries out the reaction a 2'-deoxyribonucleoside 5'-triphosphate + H2O = a 2'-deoxyribonucleoside 5'-phosphate + diphosphate + H(+). The enzyme catalyses dUTP + H2O = dUMP + diphosphate + H(+). The catalysed reaction is dTTP + H2O = dTMP + diphosphate + H(+). It catalyses the reaction dCTP + H2O = dCMP + diphosphate + H(+). Its function is as follows. Catalyzes the hydrolysis of nucleoside triphosphates, with a preference for pyrimidine deoxynucleoside triphosphates (dUTP, dTTP and dCTP). This Enterobacter sp. (strain 638) protein is Nucleoside triphosphatase NudI.